A 338-amino-acid chain; its full sequence is Methionine import ATP-binding protein MetN 1 (338 aa).

An ABC transporter domain is found at 2-241 (IQLENIEKHY…PNEKLTKDFI (240 aa)). Position 38–45 (38–45 (GYSGAGKS)) interacts with ATP.

It belongs to the ABC transporter superfamily. Methionine importer (TC 3.A.1.24) family. The complex is composed of two ATP-binding proteins (MetN), two transmembrane proteins (MetI) and a solute-binding protein (MetQ).

The protein resides in the cell membrane. It carries out the reaction L-methionine(out) + ATP + H2O = L-methionine(in) + ADP + phosphate + H(+). It catalyses the reaction D-methionine(out) + ATP + H2O = D-methionine(in) + ADP + phosphate + H(+). Functionally, part of the ABC transporter complex MetNIQ involved in methionine import. Responsible for energy coupling to the transport system. This Oceanobacillus iheyensis (strain DSM 14371 / CIP 107618 / JCM 11309 / KCTC 3954 / HTE831) protein is Methionine import ATP-binding protein MetN 1.